Consider the following 383-residue polypeptide: Large ribosomal subunit protein uL2m (383 aa).

2 disordered regions span residues 97 to 122 (FPKKGQSKGGRNHSGRVTVRHRGGGH) and 322 to 357 (MNANDHPHGGGRGKSKGNRHPVSPWGTPAKGGYKTR). 2 stretches are compositionally biased toward basic residues: residues 106–122 (GRNHSGRVTVRHRGGGH) and 330–340 (GGGRGKSKGNR).

The protein belongs to the universal ribosomal protein uL2 family. As to quaternary structure, component of the mitochondrial large ribosomal subunit (mt-LSU). Mature N.crassa 74S mitochondrial ribosomes consist of a small (37S) and a large (54S) subunit. The 37S small subunit contains a 16S ribosomal RNA (16S mt-rRNA) and 32 different proteins. The 54S large subunit contains a 23S rRNA (23S mt-rRNA) and 42 different proteins.

The protein localises to the mitochondrion. Functionally, component of the mitochondrial ribosome (mitoribosome), a dedicated translation machinery responsible for the synthesis of mitochondrial genome-encoded proteins, including at least some of the essential transmembrane subunits of the mitochondrial respiratory chain. The mitoribosomes are attached to the mitochondrial inner membrane and translation products are cotranslationally integrated into the membrane. The polypeptide is Large ribosomal subunit protein uL2m (rml2) (Neurospora crassa (strain ATCC 24698 / 74-OR23-1A / CBS 708.71 / DSM 1257 / FGSC 987)).